The following is a 425-amino-acid chain: MGGLFSRWRAKPSTVEVLENIDKEIQALEEFREKNQRLQKLWVGRLIIYSSILYLFTCLIVYLWYLPDEFTARLVMTLPFFAFPLIIWTLRTVLIFFFSKRTERNNEALDDLKSQKKKILEEVMEKETYKTAKLILERFDPDSKKAKEFEPPSAGAAVTAKPGQEIRQRTAAQRNLSPAPASSSQGPPPQGPVSPGPAKDASAPGGPPERTVAPALPRRLGSPATSVPGMGLHPPGPPLARPILPRERGALDRIVEYLVGDGPQNRYALICQQCFSHNGMALKEEFEYIAFRCAYCFFLNPARKTRPQAPRLPEFSFEKRQAVEGSSSTGPTLLESVPSAESQLIEDSLEEQDVLDNSTEQRDDKIPVTEQTSQVIEKTSGPEEPAENQEETENEETSTNEAKSPVLRADSVPNLEPSEESLVTK.

The N-myristoyl glycine moiety is linked to residue G2. The Cytoplasmic segment spans residues 2–45 (GGLFSRWRAKPSTVEVLENIDKEIQALEEFREKNQRLQKLWVGR). Positions 15 to 41 (VEVLENIDKEIQALEEFREKNQRLQKL) form a coiled coil. The chain crosses the membrane as a helical span at residues 46–66 (LIIYSSILYLFTCLIVYLWYL). Topologically, residues 67-77 (PDEFTARLVMT) are lumenal. Residues 78 to 98 (LPFFAFPLIIWTLRTVLIFFF) traverse the membrane as a helical segment. The Cytoplasmic segment spans residues 99-425 (SKRTERNNEA…EPSEESLVTK (327 aa)). Residues 101–128 (RTERNNEALDDLKSQKKKILEEVMEKET) are a coiled coil. A phosphoserine mark is found at S114, S153, S177, S182, and S194. The interval 144 to 242 (KKAKEFEPPS…HPPGPPLARP (99 aa)) is disordered. The span at 186–195 (GPPPQGPVSP) shows a compositional bias: pro residues. Residue T211 is modified to Phosphothreonine. S222 carries the phosphoserine modification. The C4-type; plays a role in ER morphology zinc finger occupies 271 to 296 (CQQCFSHNGMALKEEFEYIAFRCAYC). Residues S316, S348, and S380 each carry the phosphoserine modification. Positions 320–425 (RQAVEGSSST…EPSEESLVTK (106 aa)) are disordered. The segment covering 384–398 (EPAENQEETENEETS) has biased composition (acidic residues). The residue at position 411 (S411) is a Phosphoserine.

The protein belongs to the lunapark family. As to quaternary structure, homodimer; homodimerization requires the C4-type zinc finger motif and decreases during mitosis in a phosphorylation-dependent manner. Post-translationally, myristoylated; myristoylation is necessary for the endoplasmic reticulum (ER) three-way ER tubular junction formation, but is not required neither for membrane translocation, membrane topology formation, nor for the specific localization to ER membranes. Phosphorylated. Phosphorylation occurs at Ser-177, Ser-182, Ser-222, Ser-316 and Ser-380 during interphase. Phosphorylation occurs at Ser-114, Ser-153, Ser-194, Thr-211 and Ser-348 during mitosis; these phosphorylations reduce both its homodimerization and the ER three-way tubular junction formation. In terms of processing, subject to proteasomal degradation following phosphorylation during mitosis. In terms of tissue distribution, expressed in most tissues at basal level, with reinforcement in distal limb buds, genital bud, and in parts of the central nervous system.

It localises to the endoplasmic reticulum membrane. Its function is as follows. Endoplasmic reticulum (ER)-shaping membrane protein that plays a role in determining ER morphology. Involved in the stabilization of nascent three-way ER tubular junctions within the ER network. May also play a role as a curvature-stabilizing protein within three-way ER tubular junction network. May be involved in limb and central nervous system development. The polypeptide is Endoplasmic reticulum junction formation protein lunapark (Mus musculus (Mouse)).